The following is a 612-amino-acid chain: Threonine--tRNA ligase (612 aa).

Positions 218 to 509 are catalytic; that stretch reads DHRKLGVELG…LSEHFWGNFP (292 aa). Residues cysteine 310, histidine 361, and histidine 486 each contribute to the Zn(2+) site.

It belongs to the class-II aminoacyl-tRNA synthetase family. In terms of assembly, homodimer. Zn(2+) is required as a cofactor.

The protein resides in the cytoplasm. It catalyses the reaction tRNA(Thr) + L-threonine + ATP = L-threonyl-tRNA(Thr) + AMP + diphosphate + H(+). Its function is as follows. Catalyzes the attachment of threonine to tRNA(Thr) in a two-step reaction: L-threonine is first activated by ATP to form Thr-AMP and then transferred to the acceptor end of tRNA(Thr). Also edits incorrectly charged L-seryl-tRNA(Thr). The chain is Threonine--tRNA ligase from Helicobacter acinonychis (strain Sheeba).